Consider the following 36-residue polypeptide: Photosystem II reaction center protein M (36 aa).

Residues 7-27 (GFVASLMFVLVPTVFLIVLFI) form a helical membrane-spanning segment.

This sequence belongs to the PsbM family. In terms of assembly, PSII is composed of 1 copy each of membrane proteins PsbA, PsbB, PsbC, PsbD, PsbE, PsbF, PsbH, PsbI, PsbJ, PsbK, PsbL, PsbM, PsbT, PsbX, PsbY, PsbZ, Psb30/Ycf12, peripheral proteins PsbO, CyanoQ (PsbQ), PsbU, PsbV and a large number of cofactors. It forms dimeric complexes.

The protein localises to the cellular thylakoid membrane. One of the components of the core complex of photosystem II (PSII). PSII is a light-driven water:plastoquinone oxidoreductase that uses light energy to abstract electrons from H(2)O, generating O(2) and a proton gradient subsequently used for ATP formation. It consists of a core antenna complex that captures photons, and an electron transfer chain that converts photonic excitation into a charge separation. This subunit is found at the monomer-monomer interface. This Synechococcus sp. (strain CC9311) protein is Photosystem II reaction center protein M.